The following is a 172-amino-acid chain: Signal peptidase complex catalytic subunit SEC11 (172 aa).

Topologically, residues 1-14 (MLSSLGNPRQAAAQ) are cytoplasmic. Residues 15–35 (LMNFALILSTAFMMWKGLSVI) form a helical; Signal-anchor for type II membrane protein membrane-spanning segment. At 36–172 (TDSPSPIVVV…MGLLVVLQRE (137 aa)) the chain is on the lumenal side. Residues Ser-49 and His-90 each act as charge relay system in the active site. N-linked (GlcNAc...) asparagine glycosylation occurs at Asn-111. The active-site Charge relay system is the Asp-115. A C-terminal short (CTS) helix region spans residues 158–169 (VMLGIMGLLVVL).

This sequence belongs to the peptidase S26B family. In terms of assembly, component of the signal peptidase complex (SPC) composed of a catalytic subunit SEC11 and three accessory subunits SPC1, SPC2 and SPC3. The complex induces a local thinning of the ER membrane which is used to measure the length of the signal peptide (SP) h-region of protein substrates. This ensures the selectivity of the complex towards h-regions shorter than 18-20 amino acids. SPC associates with the translocon complex.

The protein localises to the endoplasmic reticulum membrane. The catalysed reaction is Cleavage of hydrophobic, N-terminal signal or leader sequences from secreted and periplasmic proteins.. Catalytic component of the signal peptidase complex (SPC) which catalyzes the cleavage of N-terminal signal sequences from nascent proteins as they are translocated into the lumen of the endoplasmic reticulum. Specifically cleaves N-terminal signal peptides that contain a hydrophobic alpha-helix (h-region) shorter than 18-20 amino acids. This Fusarium vanettenii (strain ATCC MYA-4622 / CBS 123669 / FGSC 9596 / NRRL 45880 / 77-13-4) (Fusarium solani subsp. pisi) protein is Signal peptidase complex catalytic subunit SEC11 (SEC11).